Here is a 178-residue protein sequence, read N- to C-terminus: Large ribosomal subunit protein uL6 (178 aa).

This sequence belongs to the universal ribosomal protein uL6 family. In terms of assembly, part of the 50S ribosomal subunit.

Functionally, this protein binds to the 23S rRNA, and is important in its secondary structure. It is located near the subunit interface in the base of the L7/L12 stalk, and near the tRNA binding site of the peptidyltransferase center. In Listeria innocua serovar 6a (strain ATCC BAA-680 / CLIP 11262), this protein is Large ribosomal subunit protein uL6.